Reading from the N-terminus, the 267-residue chain is U6 snRNA phosphodiesterase 1 (267 aa).

The segment at 1–72 (MNAAPLVGYS…EDDSARHGGR (72 aa)) is disordered. Residue H122 is the Proton acceptor of the active site. Residue 122-124 (HLS) coordinates AMP. UMP is bound by residues Q166, Y204, and 208–212 (SFHVS). AMP-binding positions include Y204 and 206-212 (DPSFHVS). The active-site Proton donor is H210.

It belongs to the 2H phosphoesterase superfamily. USB1 family. Interacts with PLRG1, CDC5L and PRPF19.

It is found in the nucleus. It carries out the reaction a 3'-end uridylyl-uridine-RNA = a 3'-end 2',3'-cyclophospho-uridine-RNA + uridine. It catalyses the reaction a 3'-end uridylyl-adenosine-RNA = a 3'-end 2',3'-cyclophospho-uridine-RNA + adenosine. In terms of biological role, 3'-5' RNA exonuclease that trims the 3' end of oligo(U) and oligo(A) tracts of the pre-U6 small nuclear RNA (snRNA) molecule, leading to the formation of a mature U6 snRNA 3' end-terminated with a 2',3'-cyclic phosphate. Participates in the U6 snRNA 3' end processing that prevents U6 snRNA degradation. In addition also removes uridines from the 3' end of U6atac snRNA and possibly the vault RNA VTRNA1-1. The polypeptide is U6 snRNA phosphodiesterase 1 (Rattus norvegicus (Rat)).